The sequence spans 549 residues: Exodeoxyribonuclease 7 large subunit (549 aa).

The tract at residues Leu511 to Phe549 is disordered.

It belongs to the XseA family. Heterooligomer composed of large and small subunits.

It localises to the cytoplasm. It carries out the reaction Exonucleolytic cleavage in either 5'- to 3'- or 3'- to 5'-direction to yield nucleoside 5'-phosphates.. Functionally, bidirectionally degrades single-stranded DNA into large acid-insoluble oligonucleotides, which are then degraded further into small acid-soluble oligonucleotides. The chain is Exodeoxyribonuclease 7 large subunit from Beijerinckia indica subsp. indica (strain ATCC 9039 / DSM 1715 / NCIMB 8712).